A 257-amino-acid chain; its full sequence is Ribosomal RNA small subunit methyltransferase J (257 aa).

S-adenosyl-L-methionine-binding positions include 107 to 108, 123 to 124, and D177; these read RD and ER.

This sequence belongs to the methyltransferase superfamily. RsmJ family.

Its subcellular location is the cytoplasm. The catalysed reaction is guanosine(1516) in 16S rRNA + S-adenosyl-L-methionine = N(2)-methylguanosine(1516) in 16S rRNA + S-adenosyl-L-homocysteine + H(+). Its function is as follows. Specifically methylates the guanosine in position 1516 of 16S rRNA. The sequence is that of Ribosomal RNA small subunit methyltransferase J from Haemophilus influenzae (strain 86-028NP).